The chain runs to 410 residues: Mating-type locus allele B1 protein (410 aa).

The tract at residues 1 to 110 is variable domain between B alleles; it reads MSSDPNFSLI…FNVVSPDVGC (110 aa). Residues 107 to 184 constitute a DNA-binding region (homeobox; TALE-type); it reads DVGCRNLSED…NARRRSGWSH (78 aa). The interval 111–410 is highly conserved between B alleles; that stretch reads RNLSEDLPAY…PFLCLSVAFV (300 aa). Disordered stretches follow at residues 202–239, 278–335, and 374–395; these read RAKL…PLTP, TPKP…TPEL, and ARGN…PDEV. Low complexity predominate over residues 205 to 233; sequence LSSSNQSTPPSSTSDSLSNNLDDVLSDNL. Residues 276–308 carry the Nuclear localization signal motif; that stretch reads KKTPKPGMPRPVTTVAKRHPARKTKPAAKPKSR. The segment covering 291-307 has biased composition (basic residues); sequence AKRHPARKTKPAAKPKS. Over residues 312–335 the composition is skewed to polar residues; it reads PRASTTPSIDSTLDSSKLESTPEL. Residues 333-410 form a not essential for B1 function region; the sequence is PELSMCSTAD…PFLCLSVAFV (78 aa). Over residues 375 to 388 the composition is skewed to basic residues; it reads RGNRKVKALPKRAG.

It belongs to the TALE/M-ATYP homeobox family.

It is found in the nucleus. Functionally, the B locus has at least 25 alleles, and any combination of two different B alleles yields a multimeric regulatory protein, that activates genes responsible for the pathogenicity and for the sexual development of the fungus within the corn plant. The chain is Mating-type locus allele B1 protein from Mycosarcoma maydis (Corn smut fungus).